Reading from the N-terminus, the 122-residue chain is ATP synthase epsilon chain (122 aa).

The segment covering 97–112 (EDLKSERELTRSRGDA) has biased composition (basic and acidic residues). Residues 97-122 (EDLKSERELTRSRGDAALRATRRLNS) form a disordered region.

Belongs to the ATPase epsilon chain family. As to quaternary structure, F-type ATPases have 2 components, CF(1) - the catalytic core - and CF(0) - the membrane proton channel. CF(1) has five subunits: alpha(3), beta(3), gamma(1), delta(1), epsilon(1). CF(0) has three main subunits: a, b and c.

It localises to the cell membrane. Produces ATP from ADP in the presence of a proton gradient across the membrane. This chain is ATP synthase epsilon chain, found in Corynebacterium aurimucosum (strain ATCC 700975 / DSM 44827 / CIP 107346 / CN-1) (Corynebacterium nigricans).